The primary structure comprises 714 residues: Polyribonucleotide nucleotidyltransferase (714 aa).

2 residues coordinate Mg(2+): aspartate 488 and aspartate 494. Residues proline 555–isoleucine 614 enclose the KH domain. An S1 motif domain is found at glycine 624–lysine 692.

This sequence belongs to the polyribonucleotide nucleotidyltransferase family. Mg(2+) is required as a cofactor.

It localises to the cytoplasm. The enzyme catalyses RNA(n+1) + phosphate = RNA(n) + a ribonucleoside 5'-diphosphate. Its function is as follows. Involved in mRNA degradation. Catalyzes the phosphorolysis of single-stranded polyribonucleotides processively in the 3'- to 5'-direction. This chain is Polyribonucleotide nucleotidyltransferase, found in Sinorhizobium medicae (strain WSM419) (Ensifer medicae).